The sequence spans 402 residues: Subtilisin-like protease 9 (402 aa).

An N-terminal signal peptide occupies residues 1–20 (MGFFRQLFSLSLCALSLAIP). The propeptide occupies 21–120 (SKLIGLENTQ…VEVDRVVKLD (100 aa)). The Inhibitor I9 domain occupies 36–119 (SYIVVMKSTI…YVEVDRVVKL (84 aa)). Residues 130-402 (SWGLGRISHK…RKLLYNGSGA (273 aa)) form the Peptidase S8 domain. Active-site charge relay system residues include aspartate 162 and histidine 193. Residue asparagine 254 is glycosylated (N-linked (GlcNAc...) asparagine). The Charge relay system role is filled by serine 348. Residues asparagine 390 and asparagine 398 are each glycosylated (N-linked (GlcNAc...) asparagine).

This sequence belongs to the peptidase S8 family.

The protein resides in the secreted. Its function is as follows. Secreted subtilisin-like serine protease with keratinolytic activity that contributes to pathogenicity. The sequence is that of Subtilisin-like protease 9 (SUB9) from Arthroderma benhamiae (strain ATCC MYA-4681 / CBS 112371) (Trichophyton mentagrophytes).